Consider the following 359-residue polypeptide: MMP endo-(1,4)-3-O-methyl-alpha-D-mannosidase (359 aa).

Monomer in solution.

It carries out the reaction Endohydrolysis of 3-O-methyl-alpha-D-mannosyl-(1-&gt;4)-3-O-methyl-D-mannose linkages within (1,4)-3-O-methyl-alpha-D-mannnan substrates.. In terms of biological role, hydrolase involved in the biosynthesis of 3-O-methylmannose polysaccharides (MMP), which are intracellular polymethylated polysaccharides implicated in the modulation of fatty acid metabolism in non-tuberculous mycobacteria. Highly specific hydrolase that catalyzes the internal cleavage of MMP. Is able to hydrolyze purified MMP into distinct lower order oligomannosides but does not cleave acylated or deacylated forms of 6-O-methylglucose lipopolysaccharide (MGLP), beta-mannans, synthetic 4alpha-oligomannosides or its own reaction products. Products were identified as four distinct oligomannosides differing in the number of mannose units (4 to 8) and methylation pattern (free or methylated C1-OH). Might serve as a recycling enzyme that hydrolyzes mature MMP into defined-size smaller oligomannosides that are, in turn, substrates for ManT and MeT1 activities for further processing into new daughter MMP chains. The polypeptide is MMP endo-(1,4)-3-O-methyl-alpha-D-mannosidase (Mycolicibacterium hassiacum (strain DSM 44199 / CIP 105218 / JCM 12690 / 3849) (Mycobacterium hassiacum)).